The chain runs to 444 residues: Zeaxanthin 4-ketolase (444 aa).

A disordered region spans residues 408 to 444 (VAGGSSSGGGGEGGKPGAGEHGLLQRQRQLAPVGVMA). Residues 412-427 (SSSGGGGEGGKPGAGE) are compositionally biased toward gly residues.

It carries out the reaction all-trans-adonixanthin + 2 AH2 + 2 O2 = all-trans-(3S,3'S)-astaxanthin + 2 A + 3 H2O. The enzyme catalyses all-trans-zeaxanthin + 2 AH2 + 2 O2 = all-trans-adonixanthin + 2 A + 3 H2O. It catalyses the reaction echinenone + 2 AH2 + 2 O2 = canthaxanthin + 2 A + 3 H2O. The catalysed reaction is all-trans-beta-carotene + 2 AH2 + 2 O2 = echinenone + 2 A + 3 H2O. It functions in the pathway carotenoid biosynthesis; astaxanthin biosynthesis. In terms of biological role, involved in the biosynthesis of ketocarotenoids which are powerful anti-oxidative molecules. Catalyzes the conversion of zeaxanthin to astaxanthin via adonixanthin. Catalyzes the conversion of beta-carotene to canthaxanthin via echinenone. This Chlamydomonas reinhardtii (Chlamydomonas smithii) protein is Zeaxanthin 4-ketolase.